Consider the following 221-residue polypeptide: UPF0502 protein XOO0224 (221 aa).

This sequence belongs to the UPF0502 family.

The chain is UPF0502 protein XOO0224 from Xanthomonas oryzae pv. oryzae (strain MAFF 311018).